The following is a 1893-amino-acid chain: Protein TIC 214 (1893 aa).

6 helical membrane-spanning segments follow: residues 18 to 38, 63 to 83, 87 to 107, 127 to 147, 175 to 195, and 224 to 244; these read IINS…FSIG, AITG…YAPL, LGRP…HFFW, LSIQ…HFIL, VGWL…LVWI, and IFSI…PSPI. 2 stretches are compositionally biased toward basic and acidic residues: residues 249-258 and 268-287; these read MKETSETEER and EIER…RSTE. Positions 249-317 are disordered; it reads MKETSETEER…TEEIRVNGKE (69 aa). The span at 298–309 shows a compositional bias: acidic residues; sequence EKEDPDKIDETE. The chain crosses the membrane as a helical span at residues 1126–1146; sequence LHYFIKFFIERIYIDILLCLI.

The protein belongs to the TIC214 family. In terms of assembly, part of the Tic complex.

It localises to the plastid. It is found in the chloroplast inner membrane. Its function is as follows. Involved in protein precursor import into chloroplasts. May be part of an intermediate translocation complex acting as a protein-conducting channel at the inner envelope. The protein is Protein TIC 214 of Vitis vinifera (Grape).